The sequence spans 82 residues: Small ribosomal subunit protein uS17 (82 aa).

This sequence belongs to the universal ribosomal protein uS17 family. As to quaternary structure, part of the 30S ribosomal subunit.

Its function is as follows. One of the primary rRNA binding proteins, it binds specifically to the 5'-end of 16S ribosomal RNA. This Aeromonas hydrophila subsp. hydrophila (strain ATCC 7966 / DSM 30187 / BCRC 13018 / CCUG 14551 / JCM 1027 / KCTC 2358 / NCIMB 9240 / NCTC 8049) protein is Small ribosomal subunit protein uS17.